Consider the following 121-residue polypeptide: Nitrogenase-stabilizing/protective protein NifW (121 aa).

Belongs to the NifW family. As to quaternary structure, homotrimer; associates with NifD.

May protect the nitrogenase Fe-Mo protein from oxidative damage. In Leptothrix cholodnii (strain ATCC 51168 / LMG 8142 / SP-6) (Leptothrix discophora (strain SP-6)), this protein is Nitrogenase-stabilizing/protective protein NifW.